The following is a 502-amino-acid chain: 1-aminocyclopropane-1-carboxylate synthase-like protein 1 (502 aa).

Residues 15–35 (CPGSDSIQDLPSNKGDGLERE) form a disordered region. E106 lines the substrate pocket. An N6-(pyridoxal phosphate)lysine modification is found at K324.

This sequence belongs to the class-I pyridoxal-phosphate-dependent aminotransferase family.

Its function is as follows. Does not catalyze the synthesis of 1-aminocyclopropane-1-carboxylate but is capable of catalyzing the deamination of L-vinylglycine. The chain is 1-aminocyclopropane-1-carboxylate synthase-like protein 1 (ACCS) from Bos taurus (Bovine).